The following is a 188-amino-acid chain: Acireductone dioxygenase (188 aa).

Positions 97, 99, 103, and 141 each coordinate Fe(2+). Ni(2+) is bound by residues His-97, His-99, Glu-103, and His-141.

This sequence belongs to the acireductone dioxygenase (ARD) family. As to quaternary structure, monomer. Requires Fe(2+) as cofactor. The cofactor is Ni(2+).

It carries out the reaction 1,2-dihydroxy-5-(methylsulfanyl)pent-1-en-3-one + O2 = 3-(methylsulfanyl)propanoate + CO + formate + 2 H(+). The catalysed reaction is 1,2-dihydroxy-5-(methylsulfanyl)pent-1-en-3-one + O2 = 4-methylsulfanyl-2-oxobutanoate + formate + 2 H(+). The protein operates within amino-acid biosynthesis; L-methionine biosynthesis via salvage pathway; L-methionine from S-methyl-5-thio-alpha-D-ribose 1-phosphate: step 5/6. Its function is as follows. Catalyzes 2 different reactions between oxygen and the acireductone 1,2-dihydroxy-3-keto-5-methylthiopentene (DHK-MTPene) depending upon the metal bound in the active site. Fe-containing acireductone dioxygenase (Fe-ARD) produces formate and 2-keto-4-methylthiobutyrate (KMTB), the alpha-ketoacid precursor of methionine in the methionine recycle pathway. Ni-containing acireductone dioxygenase (Ni-ARD) produces methylthiopropionate, carbon monoxide and formate, and does not lie on the methionine recycle pathway. This chain is Acireductone dioxygenase, found in Xylella fastidiosa (strain 9a5c).